The sequence spans 123 residues: Holo-[acyl-carrier-protein] synthase (123 aa).

Mg(2+) is bound by residues Asp-8 and Glu-60.

Belongs to the P-Pant transferase superfamily. AcpS family. Mg(2+) is required as a cofactor.

It localises to the cytoplasm. The catalysed reaction is apo-[ACP] + CoA = holo-[ACP] + adenosine 3',5'-bisphosphate + H(+). Functionally, transfers the 4'-phosphopantetheine moiety from coenzyme A to a Ser of acyl-carrier-protein. The chain is Holo-[acyl-carrier-protein] synthase from Wolbachia pipientis wMel.